Reading from the N-terminus, the 51-residue chain is Glutamate dehydrogenase (51 aa).

Lys-31 provides a ligand contact to substrate.

It belongs to the Glu/Leu/Phe/Val dehydrogenases family. In terms of assembly, homohexamer.

Its subcellular location is the mitochondrion matrix. It catalyses the reaction L-glutamate + NAD(+) + H2O = 2-oxoglutarate + NH4(+) + NADH + H(+). The catalysed reaction is L-glutamate + NADP(+) + H2O = 2-oxoglutarate + NH4(+) + NADPH + H(+). Its function is as follows. Mitochondrial glutamate dehydrogenase that converts L-glutamate into alpha-ketoglutarate. Plays a key role in glutamine anaplerosis by producing alpha-ketoglutarate, an important intermediate in the tricarboxylic acid cycle. In Electrophorus electricus (Electric eel), this protein is Glutamate dehydrogenase.